A 540-amino-acid polypeptide reads, in one-letter code: Chaperonin GroEL 4 (540 aa).

Residues 29–32 (TLGP), 86–90 (DGTTT), Gly413, 477–479 (NAA), and Asp493 each bind ATP.

Belongs to the chaperonin (HSP60) family. In terms of assembly, forms a cylinder of 14 subunits composed of two heptameric rings stacked back-to-back. Interacts with the co-chaperonin GroES.

The protein localises to the cytoplasm. It catalyses the reaction ATP + H2O + a folded polypeptide = ADP + phosphate + an unfolded polypeptide.. Its function is as follows. Together with its co-chaperonin GroES, plays an essential role in assisting protein folding. The GroEL-GroES system forms a nano-cage that allows encapsulation of the non-native substrate proteins and provides a physical environment optimized to promote and accelerate protein folding. This chain is Chaperonin GroEL 4, found in Frankia alni (strain DSM 45986 / CECT 9034 / ACN14a).